Consider the following 302-residue polypeptide: Putative gluconeogenesis factor (302 aa).

This sequence belongs to the gluconeogenesis factor family.

It localises to the cytoplasm. Required for morphogenesis under gluconeogenic growth conditions. This is Putative gluconeogenesis factor (ybhK) from Salmonella typhimurium (strain LT2 / SGSC1412 / ATCC 700720).